Here is a 249-residue protein sequence, read N- to C-terminus: 14-3-3-like protein D (249 aa).

This sequence belongs to the 14-3-3 family.

The protein is 14-3-3-like protein D of Nicotiana tabacum (Common tobacco).